The following is a 163-amino-acid chain: ATP synthase subunit delta, mitochondrial (163 aa).

A mitochondrion-targeting transit peptide spans 1–18; that stretch reads MLARTIQRFSVVAKRGYA.

It belongs to the ATPase epsilon chain family. In terms of assembly, subunit of the F-type ATPase which has 2 components, CF(1) - the catalytic core - and CF(0) - the membrane proton channel.

It is found in the mitochondrion. Its subcellular location is the mitochondrion inner membrane. Its function is as follows. Mitochondrial membrane ATP synthase (F(1)F(0) ATP synthase or Complex V) produces ATP from ADP in the presence of a proton gradient across the membrane which is generated by electron transport complexes of the respiratory chain. F-type ATPases consist of two structural domains, F(1) - containing the extramembraneous catalytic core, and F(0) - containing the membrane proton channel, linked together by a central stalk and a peripheral stalk. During catalysis, ATP turnover in the catalytic domain of F(1) is coupled via a rotary mechanism of the central stalk subunits to proton translocation. Part of the complex F(1) domain and of the central stalk which is part of the complex rotary element. The protein is ATP synthase subunit delta, mitochondrial of Caenorhabditis elegans.